A 147-amino-acid polypeptide reads, in one-letter code: Lysozyme C, intestinal isozyme (147 aa).

Positions 1–18 are cleaved as a signal peptide; sequence MKAVLILGLLLLSVTVQG. In terms of domain architecture, C-type lysozyme spans 19–147; that stretch reads KKFEKCELAR…VSSYIRGCKL (129 aa). Intrachain disulfides connect Cys-24–Cys-145, Cys-48–Cys-133, Cys-83–Cys-99, and Cys-95–Cys-113. Active-site residues include Glu-53 and Asp-71.

Belongs to the glycosyl hydrolase 22 family.

It catalyses the reaction Hydrolysis of (1-&gt;4)-beta-linkages between N-acetylmuramic acid and N-acetyl-D-glucosamine residues in a peptidoglycan and between N-acetyl-D-glucosamine residues in chitodextrins.. Lysozymes have primarily a bacteriolytic function; those in tissues and body fluids are associated with the monocyte-macrophage system and enhance the activity of immunoagents. The sequence is that of Lysozyme C, intestinal isozyme from Bos taurus (Bovine).